Here is a 542-residue protein sequence, read N- to C-terminus: DM7 family protein GG17591 (542 aa).

Basic and acidic residues predominate over residues 415 to 430 (GETQEMDEAHPTKEES). A disordered region spans residues 415 to 443 (GETQEMDEAHPTKEESKSEEEGEVQSGSQ).

Belongs to the DM7 family.

In Drosophila erecta (Fruit fly), this protein is DM7 family protein GG17591.